A 153-amino-acid chain; its full sequence is Adenosine 5'-monophosphoramidase HINT3 (153 aa).

Residues 20–130 (IFCRIANKQE…PASQLGFLSR (111 aa)) form the HIT domain. Residues 46-47 (DI) and 115-117 (HLH) contribute to the AMP site. A Histidine triad motif motif is present at residues 113-117 (HLHLH). His115 (tele-AMP-histidine intermediate) is an active-site residue.

The protein belongs to the HINT family. As to quaternary structure, forms dimers to octamers and even larger oligomer.

Its subcellular location is the cytoplasm. It localises to the nucleus. It catalyses the reaction adenosine 5'-phosphoramidate + H2O = AMP + NH4(+). In terms of biological role, exhibits adenosine 5'-monophosphoramidase activity, hydrolyzing purine nucleotide phosphoramidates with a single phosphate group such as adenosine 5'monophosphoramidate (AMP-NH2) to yield AMP and NH2. Hydrolyzes lysyl-AMP (AMP-N-epsilon-(N-alpha-acetyl lysine methyl ester)) generated by lysine tRNA ligase. In Xenopus tropicalis (Western clawed frog), this protein is Adenosine 5'-monophosphoramidase HINT3 (hint3).